Reading from the N-terminus, the 341-residue chain is MSVYSLKELAEHIGATSRGNTDVVVDSIAPLDKAQANQLTFISNAKFRPFLAQSQAGILVVSEADIEFCSANSNLLITKNPYVAYALLAQYMDTTPKAASDIASTAVIASSAKLGTNVSIGANAVIEDGVELGDNVVIGAGCFIGKNTKIGANTQLWANVSIYHEVQIGSDCLIQSGAVIGGDGFGYANERGQWIKIPQTGSVIIGNHVEIGACTCIDRGALDSTVIEDNVIIDNLCQIAHNVHIGTGTAVAGGVIMAGSLTVGRYCQIGGASVINGHMEICDQAIVTGMSMILRPITEPGIYSSGIPAQTNKEWRKTAALTLDIDKMNKRLKALEKKLAD.

H241 functions as the Proton acceptor in the catalytic mechanism.

The protein belongs to the transferase hexapeptide repeat family. LpxD subfamily. As to quaternary structure, homotrimer.

It carries out the reaction a UDP-3-O-[(3R)-3-hydroxyacyl]-alpha-D-glucosamine + a (3R)-hydroxyacyl-[ACP] = a UDP-2-N,3-O-bis[(3R)-3-hydroxyacyl]-alpha-D-glucosamine + holo-[ACP] + H(+). Its pathway is bacterial outer membrane biogenesis; LPS lipid A biosynthesis. Its function is as follows. Catalyzes the N-acylation of UDP-3-O-acylglucosamine using 3-hydroxyacyl-ACP as the acyl donor. Is involved in the biosynthesis of lipid A, a phosphorylated glycolipid that anchors the lipopolysaccharide to the outer membrane of the cell. In Mannheimia succiniciproducens (strain KCTC 0769BP / MBEL55E), this protein is UDP-3-O-acylglucosamine N-acyltransferase.